Reading from the N-terminus, the 567-residue chain is 2-succinyl-5-enolpyruvyl-6-hydroxy-3-cyclohexene-1-carboxylate synthase (567 aa).

The protein belongs to the TPP enzyme family. MenD subfamily. In terms of assembly, homodimer. Mg(2+) serves as cofactor. It depends on Mn(2+) as a cofactor. The cofactor is thiamine diphosphate.

The catalysed reaction is isochorismate + 2-oxoglutarate + H(+) = 5-enolpyruvoyl-6-hydroxy-2-succinyl-cyclohex-3-ene-1-carboxylate + CO2. It functions in the pathway quinol/quinone metabolism; 1,4-dihydroxy-2-naphthoate biosynthesis; 1,4-dihydroxy-2-naphthoate from chorismate: step 2/7. Its pathway is quinol/quinone metabolism; menaquinone biosynthesis. In terms of biological role, catalyzes the thiamine diphosphate-dependent decarboxylation of 2-oxoglutarate and the subsequent addition of the resulting succinic semialdehyde-thiamine pyrophosphate anion to isochorismate to yield 2-succinyl-5-enolpyruvyl-6-hydroxy-3-cyclohexene-1-carboxylate (SEPHCHC). In Yersinia pestis bv. Antiqua (strain Antiqua), this protein is 2-succinyl-5-enolpyruvyl-6-hydroxy-3-cyclohexene-1-carboxylate synthase.